Here is a 400-residue protein sequence, read N- to C-terminus: Phosphoglycerate kinase (400 aa).

Substrate contacts are provided by residues D19–N21, R38, H61–R64, R124, and R161. ATP-binding positions include K211, G299, E330, and G356–S359.

It belongs to the phosphoglycerate kinase family. In terms of assembly, monomer.

Its subcellular location is the cytoplasm. It catalyses the reaction (2R)-3-phosphoglycerate + ATP = (2R)-3-phospho-glyceroyl phosphate + ADP. It functions in the pathway carbohydrate degradation; glycolysis; pyruvate from D-glyceraldehyde 3-phosphate: step 2/5. The polypeptide is Phosphoglycerate kinase (Frankia alni (strain DSM 45986 / CECT 9034 / ACN14a)).